Consider the following 486-residue polypeptide: MRDIGINGIKLPTEDCNDPECPFHGKLSVRGQILKGIVISDKMTKNIVMKRYREKWSYKYQRKQRVSSKIHAYSPPCMEAKIGDIITIAECRPLNKGSSFVVIENKSNINFVDNLLNVDDKWREELYVKDLKEMISLIQKEIKSLPSKSSELPIRLDQLANCQRNLYFISGDIKQLEDSVDNFSKSVSLTPINSSDKLIRLISLGKTQSFLYKTTNDVSSLDSAINAYGEAIETYNVLSTITNNYLPYFLTASKNLADLLIFEYEKNKNASDLKRAVYYYNEFLNSAPTGTSNTPIVLKRLSSAMKYYYTLNQDIDYLEKEINYIQKAVNITNSSSANLPGLLIDLGDSLNEYYECGKSKIPFDKLEKILIESRNSYMKAKGLISDDSINLLKIFNNIGNVSRELYIHTNEISYLKEAIDFWRKSIKSEDLNKQNYSSNNILRLNNLAVGLIDLYEVESDPKYLDESQKIWNRLKRELWTRKNYKS.

A 30S ribosomal protein S17 region spans residues 1-112; that stretch reads MRDIGINGIK…IENKSNINFV (112 aa). The interval 113–486 is unknown; it reads DNLLNVDDKW…ELWTRKNYKS (374 aa).

The protein belongs to the universal ribosomal protein uS17 family. As to quaternary structure, part of the 30S ribosomal subunit.

In terms of biological role, one of the primary rRNA binding proteins, it binds specifically to the 5'-end of 16S ribosomal RNA. This is Small ribosomal subunit protein uS17B from Methanosarcina acetivorans (strain ATCC 35395 / DSM 2834 / JCM 12185 / C2A).